A 1024-amino-acid polypeptide reads, in one-letter code: Error-prone DNA polymerase (1024 aa).

It belongs to the DNA polymerase type-C family. DnaE2 subfamily.

It is found in the cytoplasm. It catalyses the reaction DNA(n) + a 2'-deoxyribonucleoside 5'-triphosphate = DNA(n+1) + diphosphate. Functionally, DNA polymerase involved in damage-induced mutagenesis and translesion synthesis (TLS). It is not the major replicative DNA polymerase. This Vibrio vulnificus (strain YJ016) protein is Error-prone DNA polymerase.